We begin with the raw amino-acid sequence, 348 residues long: Dihydroorotase (348 aa).

Zn(2+)-binding residues include H17 and H19. Substrate contacts are provided by residues 19 to 21 (HLR) and N45. Positions 103, 140, and 178 each coordinate Zn(2+). N6-carboxylysine is present on K103. H140 lines the substrate pocket. L223 is a substrate binding site. A Zn(2+)-binding site is contributed by D251. Residue D251 is part of the active site. H255 and A267 together coordinate substrate.

It belongs to the metallo-dependent hydrolases superfamily. DHOase family. Class II DHOase subfamily. In terms of assembly, homodimer. Requires Zn(2+) as cofactor.

The catalysed reaction is (S)-dihydroorotate + H2O = N-carbamoyl-L-aspartate + H(+). Its pathway is pyrimidine metabolism; UMP biosynthesis via de novo pathway; (S)-dihydroorotate from bicarbonate: step 3/3. Functionally, catalyzes the reversible cyclization of carbamoyl aspartate to dihydroorotate. The sequence is that of Dihydroorotase from Serratia proteamaculans (strain 568).